Here is a 504-residue protein sequence, read N- to C-terminus: Sodium-coupled neutral amino acid symporter 2 (504 aa).

Residues 1–22 (MKKTEMGRFNISPDEDSSSYSS) form a disordered region. At 1–76 (MKKTEMGRFN…HPGTTSFGMS (76 aa)) the chain is on the cytoplasmic side. The segment at 1 to 96 (MKKTEMGRFN…SGILGLSYAM (96 aa)) is regulates protein turnover upon amino acid deprivation. Phosphoserine is present on residues Ser12, Ser21, Ser22, and Ser55. A helical transmembrane segment spans residues 77–96 (VFNLSNAIVGSGILGLSYAM). Residue Asn82 participates in Na(+) binding. Residues 97 to 102 (ANTGIA) are Extracellular-facing. The chain crosses the membrane as a helical span at residues 103-123 (LFIILLTFVSIFSLYSVHLLL). Residues 124–158 (KTANEGGSLLYEQLGHKAYGLAGKLAASGSITMQN) are Cytoplasmic-facing. Residues 159–177 (IGAMSSYLFIVKYELPLVI) form a helical membrane-spanning segment. At 178–188 (KALMNIEDTNG) the chain is on the extracellular side. Residues 189-209 (LWYLNGDYLVLLVSFVLILPL) traverse the membrane as a helical segment. Residues 210-217 (SLLRNLGY) lie on the Cytoplasmic side of the membrane. A helical transmembrane segment spans residues 218–238 (LGYTSGLSLLCMIFFLIVVIC). Residues 239-290 (KKFQIPCPVEVALMANETVNGTFTQVALAALASNSTAADTCRPRYFIFNSQT) lie on the Extracellular side of the membrane. The cysteines at positions 245 and 279 are disulfide-linked. Asn254, Asn258, and Asn272 each carry an N-linked (GlcNAc...) asparagine glycan. The helical transmembrane segment at 291-311 (VYAVPILTFSFVCHPAVLPIY) threads the bilayer. Residues 312 to 327 (EELKSRSRRRMMNVSK) lie on the Cytoplasmic side of the membrane. A helical membrane pass occupies residues 328 to 348 (ISFFAMFLMYLLAALFGYLTF). Topologically, residues 349–369 (YEHVESELLHTYSAIVGTDIL) are extracellular. The chain crosses the membrane as a helical span at residues 370 to 390 (LLVVRLAVLVAVTLTVPVVIF). Thr384 contributes to the Na(+) binding site. Residues 391-411 (PIRSSVTHLLCPTKEFSWFRH) lie on the Cytoplasmic side of the membrane. A helical membrane pass occupies residues 412–432 (SVITVTILAFTNLLVIFVPTI). Over 433–434 (RD) the chain is Extracellular. Residues 435-455 (IFGFIGASAAAMLIFILPSAF) form a helical membrane-spanning segment. At 456–470 (YIKLVKKEPMRSVQK) the chain is on the cytoplasmic side. Residues 471 to 493 (IGALCFLLSGVVVMIGSMGLIVL) form a helical membrane-spanning segment. The Extracellular segment spans residues 494 to 504 (DWVHDASAGGH).

It belongs to the amino acid/polyamine transporter 2 family. Post-translationally, polyubiquitination by NEDD4L regulates the degradation and the activity of SLC38A2. As to expression, widely expressed. Expressed in skeletal muscle and adipose tissue (at protein level). Expressed by glutamatergic and GABAergic neurons together with astrocytes and other non-neuronal cells in the cerebral cortex (at protein level). Widely expressed in the central nervous systeme where, it is enriched in the spinal cord and the brainstem nuclei, especially those of the auditory system.

The protein localises to the cell membrane. The enzyme catalyses L-alanine(in) + Na(+)(in) = L-alanine(out) + Na(+)(out). It carries out the reaction glycine(in) + Na(+)(in) = glycine(out) + Na(+)(out). The catalysed reaction is L-serine(in) + Na(+)(in) = L-serine(out) + Na(+)(out). It catalyses the reaction L-proline(in) + Na(+)(in) = L-proline(out) + Na(+)(out). The enzyme catalyses L-methionine(in) + Na(+)(in) = L-methionine(out) + Na(+)(out). It carries out the reaction L-histidine(in) + Na(+)(in) = L-histidine(out) + Na(+)(out). The catalysed reaction is L-asparagine(in) + Na(+)(in) = L-asparagine(out) + Na(+)(out). It catalyses the reaction L-glutamine(in) + Na(+)(in) = L-glutamine(out) + Na(+)(out). The enzyme catalyses L-threonine(in) + Na(+)(in) = L-threonine(out) + Na(+)(out). It carries out the reaction L-leucine(in) + Na(+)(in) = L-leucine(out) + Na(+)(out). The catalysed reaction is L-phenylalanine(in) + Na(+)(in) = L-phenylalanine(out) + Na(+)(out). Its activity is regulated as follows. Inhibited by N-methyl-D-glucamine. Inhibited by choline. Allosteric regulation of sodium ions binding by pH. Its function is as follows. Symporter that cotransports neutral amino acids and sodium ions from the extracellular to the intracellular side of the cell membrane. The transport is pH-sensitive, Li(+)-intolerant, electrogenic, driven by the Na(+) electrochemical gradient and cotransports of neutral amino acids and sodium ions with a stoichiometry of 1:1. May function in the transport of amino acids at the blood-brain barrier. May function in the transport of amino acids in the supply of maternal nutrients to the fetus through the placenta. Maintains a key metabolic glutamine/glutamate balance underpinning retrograde signaling by dendritic release of the neurotransmitter glutamate. Transports L-proline in differentiating osteoblasts for the efficient synthesis of proline-enriched proteins and provides proline essential for osteoblast differentiation and bone formation during bone development. The protein is Sodium-coupled neutral amino acid symporter 2 of Rattus norvegicus (Rat).